The sequence spans 402 residues: S-adenosylmethionine synthase (402 aa).

Residue His-15 participates in ATP binding. Asp-17 is a Mg(2+) binding site. Glu-43 contributes to the K(+) binding site. The L-methionine site is built by Glu-56 and Gln-99. The segment at 99–109 is flexible loop; it reads QSPDIAQGVDT. Residues 174–176, 247–248, Asp-256, 262–263, Ala-279, and Lys-283 contribute to the ATP site; these read DGK, RF, and RK. Asp-256 contacts L-methionine. Residue Lys-287 coordinates L-methionine.

It belongs to the AdoMet synthase family. As to quaternary structure, homotetramer; dimer of dimers. Mg(2+) is required as a cofactor. K(+) serves as cofactor.

The protein localises to the cytoplasm. The enzyme catalyses L-methionine + ATP + H2O = S-adenosyl-L-methionine + phosphate + diphosphate. It participates in amino-acid biosynthesis; S-adenosyl-L-methionine biosynthesis; S-adenosyl-L-methionine from L-methionine: step 1/1. Functionally, catalyzes the formation of S-adenosylmethionine (AdoMet) from methionine and ATP. The overall synthetic reaction is composed of two sequential steps, AdoMet formation and the subsequent tripolyphosphate hydrolysis which occurs prior to release of AdoMet from the enzyme. The polypeptide is S-adenosylmethionine synthase (Streptomyces griseus subsp. griseus (strain JCM 4626 / CBS 651.72 / NBRC 13350 / KCC S-0626 / ISP 5235)).